Reading from the N-terminus, the 234-residue chain is Large ribosomal subunit protein uL1 (234 aa).

It belongs to the universal ribosomal protein uL1 family. Part of the 50S ribosomal subunit.

Binds directly to 23S rRNA. The L1 stalk is quite mobile in the ribosome, and is involved in E site tRNA release. Its function is as follows. Protein L1 is also a translational repressor protein, it controls the translation of the L11 operon by binding to its mRNA. In Anaeromyxobacter sp. (strain Fw109-5), this protein is Large ribosomal subunit protein uL1.